Consider the following 430-residue polypeptide: 3-phosphoshikimate 1-carboxyvinyltransferase (430 aa).

Residues Lys21, Ser22, and Arg26 each coordinate 3-phosphoshikimate. Residue Lys21 participates in phosphoenolpyruvate binding. 2 residues coordinate phosphoenolpyruvate: Gly94 and Arg122. Residues Ser167, Gln169, Asp317, and Lys344 each coordinate 3-phosphoshikimate. Residue Gln169 participates in phosphoenolpyruvate binding. The active-site Proton acceptor is the Asp317. Positions 348 and 390 each coordinate phosphoenolpyruvate.

Belongs to the EPSP synthase family. Monomer.

Its subcellular location is the cytoplasm. The catalysed reaction is 3-phosphoshikimate + phosphoenolpyruvate = 5-O-(1-carboxyvinyl)-3-phosphoshikimate + phosphate. It participates in metabolic intermediate biosynthesis; chorismate biosynthesis; chorismate from D-erythrose 4-phosphate and phosphoenolpyruvate: step 6/7. In terms of biological role, catalyzes the transfer of the enolpyruvyl moiety of phosphoenolpyruvate (PEP) to the 5-hydroxyl of shikimate-3-phosphate (S3P) to produce enolpyruvyl shikimate-3-phosphate and inorganic phosphate. The polypeptide is 3-phosphoshikimate 1-carboxyvinyltransferase (Thermodesulfovibrio yellowstonii (strain ATCC 51303 / DSM 11347 / YP87)).